The following is a 275-amino-acid chain: MLLHFSKMHGLGNDFMVVDNVTQNLYVNPDQIRRWADRHTGIGFDQMLLVEPPYDPDLDFHYRIFNADGSEVAQCGNGARCFAKFVKAKNLSNKNHLKVSTKAGKMVLHLEKDGQVTVDMGEPLFEPAAVPFKAQKAEQTYVLRVKEETVLCGVLGLGNPHCVIAVDNVDTTPVETLGAALAAHERFPESVNVGFMQKVSADEIKLRVFERGVGETRACGSGACAAAVAGIQQGLLNERVKVSLPGGDLIIRWQQGQPVKMTGPAELVYDGQMVL.

Residues Asn-13, Gln-46, and Asn-66 each coordinate substrate. Cys-75 functions as the Proton donor in the catalytic mechanism. Substrate contacts are provided by residues 76 to 77 (GN), Asn-159, Asn-192, and 210 to 211 (ER). Cys-219 serves as the catalytic Proton acceptor. A substrate-binding site is contributed by 220–221 (GS).

The protein belongs to the diaminopimelate epimerase family. As to quaternary structure, homodimer.

The protein resides in the cytoplasm. The enzyme catalyses (2S,6S)-2,6-diaminopimelate = meso-2,6-diaminopimelate. The protein operates within amino-acid biosynthesis; L-lysine biosynthesis via DAP pathway; DL-2,6-diaminopimelate from LL-2,6-diaminopimelate: step 1/1. In terms of biological role, catalyzes the stereoinversion of LL-2,6-diaminopimelate (L,L-DAP) to meso-diaminopimelate (meso-DAP), a precursor of L-lysine and an essential component of the bacterial peptidoglycan. The protein is Diaminopimelate epimerase of Idiomarina loihiensis (strain ATCC BAA-735 / DSM 15497 / L2-TR).